The primary structure comprises 200 residues: Glycerol-3-phosphate acyltransferase (200 aa).

Helical transmembrane passes span 2–22 (IHLLLVVAAYLLGSLSFAVIV), 51–71 (TAAILTLLGDALKGWVAVVAA), 84–104 (IVLLCALAAFIGHLFPVFFGF), 113–133 (ALGILVALDPWLGLACLATWV), and 143–163 (SLSALVTAVLAPVYAGLLLGW).

It belongs to the PlsY family. Probably interacts with PlsX.

It is found in the cell inner membrane. The catalysed reaction is an acyl phosphate + sn-glycerol 3-phosphate = a 1-acyl-sn-glycero-3-phosphate + phosphate. It functions in the pathway lipid metabolism; phospholipid metabolism. Its function is as follows. Catalyzes the transfer of an acyl group from acyl-phosphate (acyl-PO(4)) to glycerol-3-phosphate (G3P) to form lysophosphatidic acid (LPA). This enzyme utilizes acyl-phosphate as fatty acyl donor, but not acyl-CoA or acyl-ACP. The chain is Glycerol-3-phosphate acyltransferase from Thiobacillus denitrificans (strain ATCC 25259 / T1).